The following is a 465-amino-acid chain: Ribulose bisphosphate carboxylase large chain (465 aa).

At lysine 4 the chain carries N6,N6,N6-trimethyllysine. The substrate site is built by asparagine 113 and threonine 163. Catalysis depends on lysine 165, which acts as the Proton acceptor. Lysine 167 contributes to the substrate binding site. Residues lysine 191, aspartate 193, and glutamate 194 each contribute to the Mg(2+) site. Lysine 191 is subject to N6-carboxylysine. Catalysis depends on histidine 284, which acts as the Proton acceptor. Residues arginine 285, histidine 317, and serine 369 each contribute to the substrate site.

This sequence belongs to the RuBisCO large chain family. Type I subfamily. As to quaternary structure, heterohexadecamer of 8 large chains and 8 small chains; disulfide-linked. The disulfide link is formed within the large subunit homodimers. Requires Mg(2+) as cofactor. In terms of processing, the disulfide bond which can form in the large chain dimeric partners within the hexadecamer appears to be associated with oxidative stress and protein turnover.

It is found in the plastid. Its subcellular location is the chloroplast. The enzyme catalyses 2 (2R)-3-phosphoglycerate + 2 H(+) = D-ribulose 1,5-bisphosphate + CO2 + H2O. The catalysed reaction is D-ribulose 1,5-bisphosphate + O2 = 2-phosphoglycolate + (2R)-3-phosphoglycerate + 2 H(+). In terms of biological role, ruBisCO catalyzes two reactions: the carboxylation of D-ribulose 1,5-bisphosphate, the primary event in carbon dioxide fixation, as well as the oxidative fragmentation of the pentose substrate in the photorespiration process. Both reactions occur simultaneously and in competition at the same active site. The protein is Ribulose bisphosphate carboxylase large chain of Eucommia ulmoides (Hardy rubber tree).